The primary structure comprises 541 residues: Chaperonin GroEL 2 (541 aa).

ATP-binding positions include 29–32 and 86–90; these read TLGP and DGTTT. An Isoglutamyl lysine isopeptide (Lys-Gln) (interchain with Q-Cter in protein Pup) cross-link involves residue Lys132. ATP-binding positions include Gly413, 476–478, and Asp492; that span reads NAA.

It belongs to the chaperonin (HSP60) family. Forms a cylinder of 14 subunits composed of two heptameric rings stacked back-to-back. Interacts with the co-chaperonin GroES.

It is found in the secreted. Its subcellular location is the capsule. The protein resides in the cell surface. It localises to the cell wall. The enzyme catalyses ATP + H2O + a folded polypeptide = ADP + phosphate + an unfolded polypeptide.. Its function is as follows. Together with its co-chaperonin GroES, plays an essential role in assisting protein folding. The GroEL-GroES system forms a nano-cage that allows encapsulation of the non-native substrate proteins and provides a physical environment optimized to promote and accelerate protein folding. The chain is Chaperonin GroEL 2 from Mycolicibacterium smegmatis (strain ATCC 700084 / mc(2)155) (Mycobacterium smegmatis).